We begin with the raw amino-acid sequence, 643 residues long: Transmembrane protein 62 (643 aa).

The chain crosses the membrane as a helical span at residues 9–29 (VVAGLAAAAVAALLLEHYGLA). An N-linked (GlcNAc...) asparagine glycan is attached at Asn180. A run of 4 helical transmembrane segments spans residues 431 to 451 (IVAR…LITF), 484 to 504 (YSVL…GEII), 532 to 552 (GIIQ…WSLL), and 572 to 592 (IIPV…SCYF).

It localises to the membrane. The chain is Transmembrane protein 62 (Tmem62) from Mus musculus (Mouse).